The primary structure comprises 517 residues: Glucans biosynthesis protein G (517 aa).

A signal peptide spans 1 to 28; it reads MKHKLQMMKMRWLSAAVMLTLYTSSSWA.

Belongs to the OpgD/OpgG family.

The protein localises to the periplasm. It participates in glycan metabolism; osmoregulated periplasmic glucan (OPG) biosynthesis. Involved in the biosynthesis of osmoregulated periplasmic glucans (OPGs). In Escherichia coli O1:K1 / APEC, this protein is Glucans biosynthesis protein G.